Consider the following 471-residue polypeptide: Phosphoglycerate kinase (471 aa).

Substrate contacts are provided by residues Asp-24–Asn-26, Arg-41, His-64–Arg-67, Arg-127, and Arg-169. Residues Lys-220, Gly-307, Glu-338, and Gly-368–Ser-371 contribute to the ATP site. Positions Lys-417–Lys-471 are disordered. Over residues Thr-439–Lys-455 the composition is skewed to low complexity.

It belongs to the phosphoglycerate kinase family. Monomer.

It is found in the cytoplasm. It catalyses the reaction (2R)-3-phosphoglycerate + ATP = (2R)-3-phospho-glyceroyl phosphate + ADP. It functions in the pathway carbohydrate degradation; glycolysis; pyruvate from D-glyceraldehyde 3-phosphate: step 2/5. The sequence is that of Phosphoglycerate kinase from Malacoplasma penetrans (strain HF-2) (Mycoplasma penetrans).